Consider the following 179-residue polypeptide: Large ribosomal subunit protein bL17 (179 aa).

Residues 123 to 161 show a composition bias toward basic and acidic residues; it reads KEKDTKKKDDSKKSDDKKTSKKEAGFKSSKGESEHKKNT. The segment at 123–179 is disordered; that stretch reads KEKDTKKKDDSKKSDDKKTSKKEAGFKSSKGESEHKKNTDQVVDSSSNRRYNRVKGS. Residues 162–171 show a composition bias toward polar residues; sequence DQVVDSSSNR.

Belongs to the bacterial ribosomal protein bL17 family. As to quaternary structure, part of the 50S ribosomal subunit. Contacts protein L32.

The polypeptide is Large ribosomal subunit protein bL17 (Treponema denticola (strain ATCC 35405 / DSM 14222 / CIP 103919 / JCM 8153 / KCTC 15104)).